Here is a 213-residue protein sequence, read N- to C-terminus: Ribosomal RNA small subunit methyltransferase G (213 aa).

Residues Gly83, Leu88, 132 to 133 (IE), and Arg146 contribute to the S-adenosyl-L-methionine site.

Belongs to the methyltransferase superfamily. RNA methyltransferase RsmG family.

Its subcellular location is the cytoplasm. The catalysed reaction is guanosine(527) in 16S rRNA + S-adenosyl-L-methionine = N(7)-methylguanosine(527) in 16S rRNA + S-adenosyl-L-homocysteine. In terms of biological role, specifically methylates the N7 position of guanine in position 527 of 16S rRNA. In Granulibacter bethesdensis (strain ATCC BAA-1260 / CGDNIH1), this protein is Ribosomal RNA small subunit methyltransferase G.